A 251-amino-acid chain; its full sequence is Flap endonuclease Xni (251 aa).

Asp-104 is a Mg(2+) binding site. One can recognise a 5'-3' exonuclease domain in the interval 160–249; it reads VQPQQLPDYW…IDGNLQQLRL (90 aa). Positions 171, 172, 180, 182, and 185 each coordinate K(+). The interval 184–189 is interaction with DNA; the sequence is GIGPKS.

This sequence belongs to the Xni family. The cofactor is Mg(2+). Requires K(+) as cofactor.

In terms of biological role, has flap endonuclease activity. During DNA replication, flap endonucleases cleave the 5'-overhanging flap structure that is generated by displacement synthesis when DNA polymerase encounters the 5'-end of a downstream Okazaki fragment. This is Flap endonuclease Xni from Escherichia coli O6:K15:H31 (strain 536 / UPEC).